The primary structure comprises 406 residues: 4-hydroxy-3-methylbut-2-en-1-yl diphosphate synthase (ferredoxin) (406 aa).

Positions 315, 318, 349, and 356 each coordinate [4Fe-4S] cluster.

The protein belongs to the IspG family. The cofactor is [4Fe-4S] cluster.

The catalysed reaction is (2E)-4-hydroxy-3-methylbut-2-enyl diphosphate + 2 oxidized [2Fe-2S]-[ferredoxin] + H2O = 2-C-methyl-D-erythritol 2,4-cyclic diphosphate + 2 reduced [2Fe-2S]-[ferredoxin] + H(+). The protein operates within isoprenoid biosynthesis; isopentenyl diphosphate biosynthesis via DXP pathway; isopentenyl diphosphate from 1-deoxy-D-xylulose 5-phosphate: step 5/6. In terms of biological role, converts 2C-methyl-D-erythritol 2,4-cyclodiphosphate (ME-2,4cPP) into 1-hydroxy-2-methyl-2-(E)-butenyl 4-diphosphate. This is 4-hydroxy-3-methylbut-2-en-1-yl diphosphate synthase (ferredoxin) from Gloeothece citriformis (strain PCC 7424) (Cyanothece sp. (strain PCC 7424)).